Here is a 281-residue protein sequence, read N- to C-terminus: Phosphatidylglycerol--prolipoprotein diacylglyceryl transferase (281 aa).

Helical transmembrane passes span 29 to 49 (FYSL…GKMI), 64 to 84 (LFFY…VLFY), 100 to 120 (GGMS…FVSW), and 124 to 144 (LNWL…MFLG). An a 1,2-diacyl-sn-glycero-3-phospho-(1'-sn-glycerol)-binding site is contributed by R145. The next 3 helical transmembrane spans lie at 180 to 200 (QLYQ…LLFW), 209 to 229 (GVLV…NEFF), and 248 to 268 (GQWL…YALT).

It belongs to the Lgt family.

It localises to the cell inner membrane. It catalyses the reaction L-cysteinyl-[prolipoprotein] + a 1,2-diacyl-sn-glycero-3-phospho-(1'-sn-glycerol) = an S-1,2-diacyl-sn-glyceryl-L-cysteinyl-[prolipoprotein] + sn-glycerol 1-phosphate + H(+). Its pathway is protein modification; lipoprotein biosynthesis (diacylglyceryl transfer). Its function is as follows. Catalyzes the transfer of the diacylglyceryl group from phosphatidylglycerol to the sulfhydryl group of the N-terminal cysteine of a prolipoprotein, the first step in the formation of mature lipoproteins. The chain is Phosphatidylglycerol--prolipoprotein diacylglyceryl transferase from Erythrobacter litoralis (strain HTCC2594).